A 115-amino-acid polypeptide reads, in one-letter code: T cell receptor beta variable 7-4 (115 aa).

The first 21 residues, 1-21 (MGTRLLCWVVLGFLGTDHTGA), serve as a signal peptide directing secretion. An Ig-like domain is found at 22–115 (GVSQSPRYKV…SAVYLCASSL (94 aa)). An intrachain disulfide couples cysteine 42 to cysteine 111. Residues 67–97 (YSQSDAQRDKSGRPSGRFSAERPERSVSTLK) are disordered.

In terms of assembly, alpha-beta TR is a heterodimer composed of an alpha and beta chain; disulfide-linked. The alpha-beta TR is associated with the transmembrane signaling CD3 coreceptor proteins to form the TR-CD3 (TcR or TCR). The assembly of alpha-beta TR heterodimers with CD3 occurs in the endoplasmic reticulum where a single alpha-beta TR heterodimer associates with one CD3D-CD3E heterodimer, one CD3G-CD3E heterodimer and one CD247 homodimer forming a stable octameric structure. CD3D-CD3E and CD3G-CD3E heterodimers preferentially associate with TR alpha and TR beta chains, respectively. The association of the CD247 homodimer is the last step of TcR assembly in the endoplasmic reticulum and is required for transport to the cell surface.

Its subcellular location is the cell membrane. In terms of biological role, v region of the variable domain of T cell receptor (TR) beta chain that participates in the antigen recognition. Alpha-beta T cell receptors are antigen specific receptors which are essential to the immune response and are present on the cell surface of T lymphocytes. Recognize peptide-major histocompatibility (MH) (pMH) complexes that are displayed by antigen presenting cells (APC), a prerequisite for efficient T cell adaptive immunity against pathogens. Binding of alpha-beta TR to pMH complex initiates TR-CD3 clustering on the cell surface and intracellular activation of LCK that phosphorylates the ITAM motifs of CD3G, CD3D, CD3E and CD247 enabling the recruitment of ZAP70. In turn ZAP70 phosphorylates LAT, which recruits numerous signaling molecules to form the LAT signalosome. The LAT signalosome propagates signal branching to three major signaling pathways, the calcium, the mitogen-activated protein kinase (MAPK) kinase and the nuclear factor NF-kappa-B (NF-kB) pathways, leading to the mobilization of transcription factors that are critical for gene expression and essential for T cell growth and differentiation. The T cell repertoire is generated in the thymus, by V-(D)-J rearrangement. This repertoire is then shaped by intrathymic selection events to generate a peripheral T cell pool of self-MH restricted, non-autoaggressive T cells. Post-thymic interaction of alpha-beta TR with the pMH complexes shapes TR structural and functional avidity. In Homo sapiens (Human), this protein is T cell receptor beta variable 7-4.